The primary structure comprises 380 residues: Crotonobetainyl-CoA reductase (380 aa).

Belongs to the acyl-CoA dehydrogenase family. Homotetramer. Requires FAD as cofactor.

Its subcellular location is the cytoplasm. It carries out the reaction 4-(trimethylamino)butanoyl-CoA + oxidized [electron-transfer flavoprotein] + H(+) = crotonobetainyl-CoA + reduced [electron-transfer flavoprotein]. Its pathway is amine and polyamine metabolism; carnitine metabolism. Its function is as follows. Catalyzes the reduction of crotonobetainyl-CoA to gamma-butyrobetainyl-CoA. This is Crotonobetainyl-CoA reductase from Escherichia coli O6:K15:H31 (strain 536 / UPEC).